The sequence spans 267 residues: tRNA-cytidine(32) 2-sulfurtransferase 2 (267 aa).

The PP-loop motif motif lies at 42–47 (SGGKDS). The [4Fe-4S] cluster site is built by C117, C120, and C208.

This sequence belongs to the TtcA family. As to quaternary structure, homodimer. It depends on Mg(2+) as a cofactor. The cofactor is [4Fe-4S] cluster.

Its subcellular location is the cytoplasm. It catalyses the reaction cytidine(32) in tRNA + S-sulfanyl-L-cysteinyl-[cysteine desulfurase] + AH2 + ATP = 2-thiocytidine(32) in tRNA + L-cysteinyl-[cysteine desulfurase] + A + AMP + diphosphate + H(+). It participates in tRNA modification. Catalyzes the ATP-dependent 2-thiolation of cytidine in position 32 of tRNA, to form 2-thiocytidine (s(2)C32). The sulfur atoms are provided by the cysteine/cysteine desulfurase (IscS) system. The sequence is that of tRNA-cytidine(32) 2-sulfurtransferase 2 from Francisella tularensis subsp. holarctica (strain FTNF002-00 / FTA).